A 218-amino-acid polypeptide reads, in one-letter code: GTP cyclohydrolase 1 (218 aa).

3 residues coordinate Zn(2+): Cys-111, His-114, and Cys-182.

Belongs to the GTP cyclohydrolase I family. In terms of assembly, toroid-shaped homodecamer, composed of two pentamers of five dimers.

It catalyses the reaction GTP + H2O = 7,8-dihydroneopterin 3'-triphosphate + formate + H(+). It functions in the pathway cofactor biosynthesis; 7,8-dihydroneopterin triphosphate biosynthesis; 7,8-dihydroneopterin triphosphate from GTP: step 1/1. The sequence is that of GTP cyclohydrolase 1 from Buchnera aphidicola subsp. Schizaphis graminum (strain Sg).